The primary structure comprises 395 residues: ADP-ribosylation factor-like protein 13A (395 aa).

GTP is bound by residues 28–35, 71–75, and 130–133; these read GLDNSGKS, DLTGD, and NKQD.

The protein belongs to the small GTPase superfamily. Arf family.

The polypeptide is ADP-ribosylation factor-like protein 13A (Arl13a) (Rattus norvegicus (Rat)).